The following is a 546-amino-acid chain: CTP synthase (546 aa).

An amidoligase domain region spans residues 1 to 267 (MSKFVFVTGG…AQQTLELLNL (267 aa)). Ser-13 contacts CTP. Ser-13 is a binding site for UTP. Residues 14–19 (SIGKGI) and Asp-71 contribute to the ATP site. Mg(2+)-binding residues include Asp-71 and Glu-141. Residues 148 to 150 (DIE), 188 to 193 (KTKPTQ), and Lys-224 contribute to the CTP site. UTP-binding positions include 188–193 (KTKPTQ) and Lys-224. Positions 292-534 (EIAIVGKYVQ…MKAALKGREE (243 aa)) constitute a Glutamine amidotransferase type-1 domain. Residue Gly-354 coordinates L-glutamine. Cys-381 functions as the Nucleophile; for glutamine hydrolysis in the catalytic mechanism. L-glutamine is bound by residues 382–385 (LGMQ), Glu-405, and Arg-462. Residues His-507 and Glu-509 contribute to the active site.

Belongs to the CTP synthase family. Homotetramer.

The catalysed reaction is UTP + L-glutamine + ATP + H2O = CTP + L-glutamate + ADP + phosphate + 2 H(+). It carries out the reaction L-glutamine + H2O = L-glutamate + NH4(+). The enzyme catalyses UTP + NH4(+) + ATP = CTP + ADP + phosphate + 2 H(+). Its pathway is pyrimidine metabolism; CTP biosynthesis via de novo pathway; CTP from UDP: step 2/2. With respect to regulation, allosterically activated by GTP, when glutamine is the substrate; GTP has no effect on the reaction when ammonia is the substrate. The allosteric effector GTP functions by stabilizing the protein conformation that binds the tetrahedral intermediate(s) formed during glutamine hydrolysis. Inhibited by the product CTP, via allosteric rather than competitive inhibition. In terms of biological role, catalyzes the ATP-dependent amination of UTP to CTP with either L-glutamine or ammonia as the source of nitrogen. Regulates intracellular CTP levels through interactions with the four ribonucleotide triphosphates. This Microcystis aeruginosa (strain NIES-843 / IAM M-2473) protein is CTP synthase.